Here is an 89-residue protein sequence, read N- to C-terminus: Small ribosomal subunit protein uS15 (89 aa).

It belongs to the universal ribosomal protein uS15 family. Part of the 30S ribosomal subunit. Forms a bridge to the 50S subunit in the 70S ribosome, contacting the 23S rRNA.

One of the primary rRNA binding proteins, it binds directly to 16S rRNA where it helps nucleate assembly of the platform of the 30S subunit by binding and bridging several RNA helices of the 16S rRNA. Functionally, forms an intersubunit bridge (bridge B4) with the 23S rRNA of the 50S subunit in the ribosome. In Tolumonas auensis (strain DSM 9187 / NBRC 110442 / TA 4), this protein is Small ribosomal subunit protein uS15.